We begin with the raw amino-acid sequence, 322 residues long: Elongation factor Ts, mitochondrial (322 aa).

It belongs to the EF-Ts family.

It is found in the mitochondrion. In terms of biological role, associates with the EF-Tu.GDP complex and induces the exchange of GDP to GTP. It remains bound to the aminoacyl-tRNA.EF-Tu.GTP complex up to the GTP hydrolysis stage on the ribosome. The protein is Elongation factor Ts, mitochondrial of Chlamydomonas reinhardtii (Chlamydomonas smithii).